The primary structure comprises 189 residues: Probable nicotinate-nucleotide adenylyltransferase (189 aa).

This sequence belongs to the NadD family.

The enzyme catalyses nicotinate beta-D-ribonucleotide + ATP + H(+) = deamido-NAD(+) + diphosphate. Its pathway is cofactor biosynthesis; NAD(+) biosynthesis; deamido-NAD(+) from nicotinate D-ribonucleotide: step 1/1. Its function is as follows. Catalyzes the reversible adenylation of nicotinate mononucleotide (NaMN) to nicotinic acid adenine dinucleotide (NaAD). In Staphylococcus aureus (strain MRSA252), this protein is Probable nicotinate-nucleotide adenylyltransferase.